The primary structure comprises 431 residues: Serine hydroxymethyltransferase 2 (431 aa).

(6S)-5,6,7,8-tetrahydrofolate contacts are provided by residues L131 and G135–L137. The residue at position 240 (K240) is an N6-(pyridoxal phosphate)lysine.

This sequence belongs to the SHMT family. In terms of assembly, homodimer. Pyridoxal 5'-phosphate serves as cofactor.

The protein resides in the cytoplasm. The enzyme catalyses (6R)-5,10-methylene-5,6,7,8-tetrahydrofolate + glycine + H2O = (6S)-5,6,7,8-tetrahydrofolate + L-serine. The protein operates within one-carbon metabolism; tetrahydrofolate interconversion. It functions in the pathway amino-acid biosynthesis; glycine biosynthesis; glycine from L-serine: step 1/1. Functionally, catalyzes the reversible interconversion of serine and glycine with tetrahydrofolate (THF) serving as the one-carbon carrier. This reaction serves as the major source of one-carbon groups required for the biosynthesis of purines, thymidylate, methionine, and other important biomolecules. Also exhibits THF-independent aldolase activity toward beta-hydroxyamino acids, producing glycine and aldehydes, via a retro-aldol mechanism. The protein is Serine hydroxymethyltransferase 2 of Photobacterium profundum (strain SS9).